A 114-amino-acid polypeptide reads, in one-letter code: Replication initiation control protein YabA (114 aa).

Zn(2+) contacts are provided by His-79, Cys-81, Cys-95, and Cys-98.

This sequence belongs to the YabA family. As to quaternary structure, homotetramer. Interacts with both DnaA and DnaN, acting as a bridge between these two proteins. Zn(2+) is required as a cofactor.

The protein resides in the cytoplasm. It localises to the nucleoid. In terms of biological role, involved in control of chromosome replication initiation. Inhibits the cooperative binding of DnaA to the oriC region, thus negatively regulating initiation of chromosome replication. Inhibits the ability of DnaA-ATP to form a helix on DNA; does not disassemble preformed DnaA-DNA helices. Decreases the residence time of DnaA on the chromosome at its binding sites (oriC, replication forks and promoter-binding sites). Tethers DnaA to the replication machinery via the DNA polymerase beta sliding clamp subunit (dnaN). Associates with oriC and other DnaA targets on the chromosome in a DnaA-dependent manner. The chain is Replication initiation control protein YabA from Lactobacillus johnsonii (strain CNCM I-12250 / La1 / NCC 533).